Consider the following 157-residue polypeptide: Ribosomal RNA large subunit methyltransferase H (157 aa).

Residues Leu73, Gly105, and 124–129 (MSKMTF) each bind S-adenosyl-L-methionine.

This sequence belongs to the RNA methyltransferase RlmH family. As to quaternary structure, homodimer.

The protein localises to the cytoplasm. The catalysed reaction is pseudouridine(1915) in 23S rRNA + S-adenosyl-L-methionine = N(3)-methylpseudouridine(1915) in 23S rRNA + S-adenosyl-L-homocysteine + H(+). Specifically methylates the pseudouridine at position 1915 (m3Psi1915) in 23S rRNA. In Bacteroides fragilis (strain ATCC 25285 / DSM 2151 / CCUG 4856 / JCM 11019 / LMG 10263 / NCTC 9343 / Onslow / VPI 2553 / EN-2), this protein is Ribosomal RNA large subunit methyltransferase H.